Consider the following 382-residue polypeptide: Galactokinase (382 aa).

34–37 contributes to the substrate binding site; sequence EHTD. ATP is bound at residue 124–130; it reads GAGLSSS. Mg(2+) is bound by residues Ser-130 and Glu-162. The active-site Proton acceptor is the Asp-174. Residue Tyr-223 participates in substrate binding.

The protein belongs to the GHMP kinase family. GalK subfamily.

Its subcellular location is the cytoplasm. It catalyses the reaction alpha-D-galactose + ATP = alpha-D-galactose 1-phosphate + ADP + H(+). It participates in carbohydrate metabolism; galactose metabolism. In terms of biological role, catalyzes the transfer of the gamma-phosphate of ATP to D-galactose to form alpha-D-galactose-1-phosphate (Gal-1-P). In Erwinia tasmaniensis (strain DSM 17950 / CFBP 7177 / CIP 109463 / NCPPB 4357 / Et1/99), this protein is Galactokinase.